A 196-amino-acid polypeptide reads, in one-letter code: MSNIDNLTSRIIKDAEDKKRIILSEAEEKKSKIIAKKQEKAASEEKIIIEKAETEAVAREERIISSAELQARNEKLKSKQTVISKVFETTIEELCNASSDDFKGFVKTVILNSTLAGDENLILNEQGKKMIDSDFVAELNREIGSKGNITLSDKTGNFKGGFILEKNGIEINNTFEALVSSLKDEMGLEVARVLFS.

The protein belongs to the V-ATPase E subunit family.

Functionally, produces ATP from ADP in the presence of a proton gradient across the membrane. This is V-type proton ATPase subunit E from Clostridium botulinum (strain Alaska E43 / Type E3).